Reading from the N-terminus, the 305-residue chain is Acetylglutamate kinase (305 aa).

Residues 80–81 (GG), arginine 102, and asparagine 196 each bind substrate.

The protein belongs to the acetylglutamate kinase family. ArgB subfamily.

The protein resides in the cytoplasm. It catalyses the reaction N-acetyl-L-glutamate + ATP = N-acetyl-L-glutamyl 5-phosphate + ADP. It functions in the pathway amino-acid biosynthesis; L-arginine biosynthesis; N(2)-acetyl-L-ornithine from L-glutamate: step 2/4. Functionally, catalyzes the ATP-dependent phosphorylation of N-acetyl-L-glutamate. The protein is Acetylglutamate kinase of Chlorobium luteolum (strain DSM 273 / BCRC 81028 / 2530) (Pelodictyon luteolum).